Reading from the N-terminus, the 354-residue chain is Rhodopsin (354 aa).

Topologically, residues Met-1–Ala-36 are extracellular. 2 N-linked (GlcNAc...) asparagine glycosylation sites follow: Asn-2 and Asn-15. Residues Tyr-37 to Val-61 form a helical membrane-spanning segment. The Cytoplasmic portion of the chain corresponds to Thr-62–Asn-73. Residues Tyr-74–Tyr-96 form a helical membrane-spanning segment. The Extracellular portion of the chain corresponds to Thr-97–Cys-110. The cysteines at positions 110 and 187 are disulfide-linked. A helical membrane pass occupies residues Asn-111 to Val-133. Residues Glu-134 to Trp-136 carry the 'Ionic lock' involved in activated form stabilization motif. Topologically, residues Glu-134–His-152 are cytoplasmic. A helical membrane pass occupies residues Ala-153–Leu-173. The Extracellular portion of the chain corresponds to Gly-174 to Ser-202. Residues Phe-203–Gly-224 traverse the membrane as a helical segment. The Cytoplasmic segment spans residues Arg-225 to Arg-252. The helical transmembrane segment at Met-253 to Tyr-274 threads the bilayer. Residues Ile-275–Leu-286 are Extracellular-facing. The helical transmembrane segment at Phe-287–Cys-308 threads the bilayer. Lys-296 is subject to N6-(retinylidene)lysine. Topologically, residues Met-309–Ala-354 are cytoplasmic. S-palmitoyl cysteine attachment occurs at residues Cys-322 and Cys-323. The interval Gly-333–Ala-354 is disordered. The segment covering Ala-334–Ala-354 has biased composition (low complexity).

Belongs to the G-protein coupled receptor 1 family. Opsin subfamily. In terms of processing, phosphorylated on some or all of the serine and threonine residues present in the C-terminal region. Contains one covalently linked retinal chromophore.

It is found in the membrane. The protein resides in the cell projection. It localises to the cilium. Its subcellular location is the photoreceptor outer segment. Photoreceptor required for image-forming vision at low light intensity. While most salt water fish species use retinal as chromophore, most freshwater fish use 3-dehydroretinal, or a mixture of retinal and 3-dehydroretinal. Light-induced isomerization of 11-cis to all-trans retinal triggers a conformational change that activates signaling via G-proteins. Subsequent receptor phosphorylation mediates displacement of the bound G-protein alpha subunit by arrestin and terminates signaling. This Poecilia reticulata (Guppy) protein is Rhodopsin (rho).